The sequence spans 215 residues: Hibernation-associated plasma protein HP-27 (215 aa).

The signal sequence occupies residues Met1–Ser30. Residues Gly34–Gly79 form a disordered region. The 39-residue stretch at Gly43–Thr81 folds into the Collagen-like domain. Over residues Pro44–Pro63 the composition is skewed to pro residues. Residues His85–Asn215 form the C1q domain. Asn155 carries N-linked (GlcNAc...) asparagine glycosylation.

As to expression, plasma; synthesized in the liver.

The protein resides in the secreted. Functionally, plasma proteins HP-20, HP-25, HP-27 and HP-55 form a 140 kDa complex via disulfide bonds in the plasma and are hibernation specific. In Tamias sibiricus (Siberian chipmunk), this protein is Hibernation-associated plasma protein HP-27.